We begin with the raw amino-acid sequence, 345 residues long: Ribosomal RNA small subunit methyltransferase H (345 aa).

Residues 47–49 (GGY), aspartate 65, phenylalanine 92, aspartate 113, and glutamine 120 each bind S-adenosyl-L-methionine. A disordered region spans residues 296-345 (EPGPDEVAGNPRARSAKLRAAERTNAPAHPGGDLMGLLPAPPPQRHGRRR).

This sequence belongs to the methyltransferase superfamily. RsmH family.

The protein localises to the cytoplasm. The catalysed reaction is cytidine(1402) in 16S rRNA + S-adenosyl-L-methionine = N(4)-methylcytidine(1402) in 16S rRNA + S-adenosyl-L-homocysteine + H(+). Specifically methylates the N4 position of cytidine in position 1402 (C1402) of 16S rRNA. This is Ribosomal RNA small subunit methyltransferase H from Xanthobacter autotrophicus (strain ATCC BAA-1158 / Py2).